Reading from the N-terminus, the 689-residue chain is Pyocin-S2 (689 aa).

Residues histidine 656, histidine 681, and histidine 685 each coordinate Zn(2+).

This sequence belongs to the colicin/pyosin nuclease family. As to quaternary structure, purified pyocin S2 makes up a complex of the two (large and small) proteins. The large protein, but not the pyocin complex, shows in vitro DNase activity.

Causes breakdown of chromosomal DNA as well as complete inhibition of lipid synthesis in sensitive cells. This Pseudomonas aeruginosa (strain ATCC 15692 / DSM 22644 / CIP 104116 / JCM 14847 / LMG 12228 / 1C / PRS 101 / PAO1) protein is Pyocin-S2 (pys2).